A 1446-amino-acid polypeptide reads, in one-letter code: DNA-directed RNA polymerase subunit beta'' (1446 aa).

Residues cysteine 217, cysteine 285, cysteine 292, and cysteine 295 each coordinate Zn(2+).

Belongs to the RNA polymerase beta' chain family. RpoC2 subfamily. In plastids the minimal PEP RNA polymerase catalytic core is composed of four subunits: alpha, beta, beta', and beta''. When a (nuclear-encoded) sigma factor is associated with the core the holoenzyme is formed, which can initiate transcription. Requires Zn(2+) as cofactor.

The protein resides in the plastid. It is found in the chloroplast. It carries out the reaction RNA(n) + a ribonucleoside 5'-triphosphate = RNA(n+1) + diphosphate. In terms of biological role, DNA-dependent RNA polymerase catalyzes the transcription of DNA into RNA using the four ribonucleoside triphosphates as substrates. The sequence is that of DNA-directed RNA polymerase subunit beta'' from Thalassiosira pseudonana (Marine diatom).